Here is a 343-residue protein sequence, read N- to C-terminus: S-adenosylmethionine:tRNA ribosyltransferase-isomerase (343 aa).

The protein belongs to the QueA family. Monomer.

The protein localises to the cytoplasm. The catalysed reaction is 7-aminomethyl-7-carbaguanosine(34) in tRNA + S-adenosyl-L-methionine = epoxyqueuosine(34) in tRNA + adenine + L-methionine + 2 H(+). It participates in tRNA modification; tRNA-queuosine biosynthesis. Its function is as follows. Transfers and isomerizes the ribose moiety from AdoMet to the 7-aminomethyl group of 7-deazaguanine (preQ1-tRNA) to give epoxyqueuosine (oQ-tRNA). This is S-adenosylmethionine:tRNA ribosyltransferase-isomerase from Coxiella burnetii (strain CbuG_Q212) (Coxiella burnetii (strain Q212)).